Here is a 377-residue protein sequence, read N- to C-terminus: D-alanine--D-alanine ligase (377 aa).

In terms of domain architecture, ATP-grasp spans 140–349 (KELLTVNNIR…NVELVDKLID (210 aa)). 170–225 (VKDLGDVVFVKAANQGSSVGVSRAKTADEFEAALTDSFQYDYKVLIEAAVKGPREL) serves as a coordination point for ATP. Mg(2+) is bound by residues D303, E316, and N318.

Belongs to the D-alanine--D-alanine ligase family. Requires Mg(2+) as cofactor. The cofactor is Mn(2+).

It localises to the cytoplasm. The enzyme catalyses 2 D-alanine + ATP = D-alanyl-D-alanine + ADP + phosphate + H(+). The protein operates within cell wall biogenesis; peptidoglycan biosynthesis. In terms of biological role, cell wall formation. In Leuconostoc citreum (strain KM20), this protein is D-alanine--D-alanine ligase.